The chain runs to 582 residues: Membrane-bound O-acyltransferase GUP1 (582 aa).

At 1–61 (MVIPRYHLIP…IIKQANPKSR (61 aa)) the chain is on the extracellular side. A helical membrane pass occupies residues 62–82 (WSTIEFKFYYLVFLIIVPLMF). The Cytoplasmic segment spans residues 83 to 121 (KAGMESANENNPNYPKYEHLLSNGWIFGRKVDNSDQQYR). A helical transmembrane segment spans residues 122–144 (FFRNNFPLLCLLIIIHVGLRRVI). At 145–158 (NRIIPLSSKRTYFD) the chain is on the extracellular side. The helical transmembrane segment at 159 to 179 (FIFGIIFLIGAHGVNVLKLSI) threads the bilayer. Topologically, residues 180–195 (HLLINYLIGKYIKNYK) are cytoplasmic. Residues 196 to 216 (LSLWITWIYGISSLFFNEWYG) traverse the membrane as a helical segment. At 217-294 (NYTLGLSFLS…TAPLPIEDYN (78 aa)) the chain is on the extracellular side. The chain crosses the membrane as a helical span at residues 295–315 (IFNYISYLTYTPLFIAGPILT). The Cytoplasmic segment spans residues 316–343 (FNDYIYQSNYQQSSSTKDYHRIMMYLIR). A helical transmembrane segment spans residues 344-364 (FIFCLLTLEFILHFMYVVAAS). Over 365-373 (KTKSWEGNL) the chain is Extracellular. A helical membrane pass occupies residues 374-394 (PFQISMLGMFNLNIIWLKLLI). Over 395-454 (PWRLFRLWSLLDGIDPPENMIRCMDNNFSALAFWRAWHRSYNRWIIRYIYLPMGGGGKYR) the chain is Cytoplasmic. 2 helical membrane-spanning segments follow: residues 455 to 475 (ILNS…ELKL) and 476 to 496 (LMWG…TMIF). His-469 is an active-site residue. Over 497-507 (KKYRNQWWYRH) the chain is Cytoplasmic. A helical transmembrane segment spans residues 508–528 (LCGVGAVINIWMMMIANLVGF). At 529-548 (CLGTDGMWKLLHDLFKTFDG) the chain is on the extracellular side. A helical transmembrane segment spans residues 549-569 (VRFLIISSGALFVGAQIMFEI). Topologically, residues 570-582 (RESEMRKGINVRC) are cytoplasmic.

Belongs to the membrane-bound acyltransferase family.

It is found in the cell membrane. The protein resides in the endoplasmic reticulum membrane. It localises to the mitochondrion membrane. Functionally, membrane-bound O-acyltransferase involved in the remodeling of glycosylphosphatidylinositol (GPI) anchors. Acts only on GPI-anchored proteins, but not on free GPI lipids. Also involved in lipid metabolism, having profound effects on sphingolipid-sterol-ordered domains integrity and assembly. Involved in cell integrity and apoptosis. The protein is Membrane-bound O-acyltransferase GUP1 (GUP1) of Candida tropicalis (Yeast).